The primary structure comprises 396 residues: Probable sugar efflux transporter (396 aa).

Transmembrane regions (helical) follow at residues 15–35 (VVTL…PVGL), 50–70 (VGIM…PFML), 81–101 (LICL…SWSF), 103–123 (VLVI…SITA), 136–156 (AQAL…GLPL), 170–190 (FFAI…LLPL), 209–229 (PALM…YTAY), 246–266 (FATA…VIFG), 275–295 (ALVS…LPAA), 299–319 (IHLG…GLGM), 333–353 (VAMA…ALVG), and 364–384 (MIGY…IIIF).

The protein belongs to the major facilitator superfamily. SotB (TC 2.A.1.2) family.

The protein localises to the cell inner membrane. Functionally, involved in the efflux of sugars. The physiological role may be the reduction of the intracellular concentration of toxic sugars or sugar metabolites. This chain is Probable sugar efflux transporter, found in Escherichia coli O6:K15:H31 (strain 536 / UPEC).